A 310-amino-acid chain; its full sequence is Methionyl-tRNA formyltransferase (310 aa).

109–112 serves as a coordination point for (6S)-5,6,7,8-tetrahydrofolate; the sequence is SLLP. A disordered region spans residues 283–310; the sequence is QPQGKKAMPAADWARGARIGDGERFGDD. Basic and acidic residues predominate over residues 300–310; the sequence is RIGDGERFGDD.

It belongs to the Fmt family.

The catalysed reaction is L-methionyl-tRNA(fMet) + (6R)-10-formyltetrahydrofolate = N-formyl-L-methionyl-tRNA(fMet) + (6S)-5,6,7,8-tetrahydrofolate + H(+). Its function is as follows. Attaches a formyl group to the free amino group of methionyl-tRNA(fMet). The formyl group appears to play a dual role in the initiator identity of N-formylmethionyl-tRNA by promoting its recognition by IF2 and preventing the misappropriation of this tRNA by the elongation apparatus. This chain is Methionyl-tRNA formyltransferase, found in Thermobifida fusca (strain YX).